The sequence spans 506 residues: Maturase K (506 aa).

This sequence belongs to the intron maturase 2 family. MatK subfamily.

Its subcellular location is the plastid. It localises to the chloroplast. Usually encoded in the trnK tRNA gene intron. Probably assists in splicing its own and other chloroplast group II introns. This Trifolium incarnatum (Crimson clover) protein is Maturase K.